The primary structure comprises 185 residues: MEVHGKPKASPSCSSPTRDSSGVPVSKELLTAGSDGRGGIWDRLLINSQPKSRKTSTLQTVRIERSPLLDQVQTFLPQMARANEKLRKEMAAAPPGRFNIENIDGPHSKVIQMDVALFEMNQSDSKEVDSSEESSQDSSENSSESEDEDDSIPSEVTIDNIKLPNSEGGKGKIEVLDSPASKKKK.

Positions 1 to 40 (MEVHGKPKASPSCSSPTRDSSGVPVSKELLTAGSDGRGGI) are disordered. Residues 10–21 (SPSCSSPTRDSS) are compositionally biased toward low complexity. A phosphoserine mark is found at Ser34 and Ser66. The segment at 118 to 185 (FEMNQSDSKE…LDSPASKKKK (68 aa)) is disordered. The segment covering 143 to 152 (SESEDEDDSI) has biased composition (acidic residues). Ser178 carries the post-translational modification Phosphoserine.

In terms of assembly, interacts with NOP58, RUVBL1 and RUVBL2; the interactions are direct and NOPCHAP1 bridges the association of NOP58 with RUVBL1:RUVBL2 even in absence of snoRNAs. The interactions with RUVBL1 and RUVBL2 are disrupted upon ATP binding.

Its subcellular location is the nucleus. Client-loading PAQosome/R2TP complex cofactor that selects NOP58 to promote box C/D small nucleolar ribonucleoprotein (snoRNP) assembly. Acts as a bridge between NOP58 and the R2TP complex via RUVBL1:RUVBL2. This is NOP protein chaperone 1 from Homo sapiens (Human).